A 457-amino-acid polypeptide reads, in one-letter code: Pancreatic triacylglycerol lipase (457 aa).

The N-terminal stretch at Leu-1–Ala-7 is a signal peptide. Cystine bridges form between Cys-12–Cys-18 and Cys-99–Cys-110. The active-site Nucleophile is the Ser-161. Asp-185 acts as the Charge relay system in catalysis. Ca(2+) contacts are provided by Glu-196, Arg-199, Asp-201, and Asp-204. The cysteines at positions 246 and 270 are disulfide-linked. Catalysis depends on His-272, which acts as the Charge relay system. Intrachain disulfides connect Cys-294–Cys-305 and Cys-308–Cys-313. Residue Asn-343 is glycosylated (N-linked (GlcNAc...) asparagine). Residues Trp-347–Cys-457 form the PLAT domain. Cys-441 and Cys-457 are oxidised to a cystine.

This sequence belongs to the AB hydrolase superfamily. Lipase family. Forms a 1:1 stoichiometric complex with (pro)colipase/CLPS.

It is found in the secreted. It carries out the reaction a triacylglycerol + H2O = a diacylglycerol + a fatty acid + H(+). The enzyme catalyses 1,2,3-tributanoylglycerol + H2O = dibutanoylglycerol + butanoate + H(+). The catalysed reaction is 1,2,3-tri-(9Z-octadecenoyl)-glycerol + H2O = di-(9Z)-octadecenoylglycerol + (9Z)-octadecenoate + H(+). It catalyses the reaction all-trans-retinyl hexadecanoate + H2O = all-trans-retinol + hexadecanoate + H(+). It carries out the reaction 1,2-di-(9Z-octadecenoyl)-glycerol + H2O = (9Z-octadecenoyl)-glycerol + (9Z)-octadecenoate + H(+). Inhibited by bile salts, is reactivated by (pro)colipase/CLPS. In terms of biological role, plays an important role in fat metabolism. It preferentially splits the esters of long-chain fatty acids at positions 1 and 3, producing mainly 2-monoacylglycerol and free fatty acids, and shows considerably higher activity against insoluble emulsified substrates than against soluble ones. The chain is Pancreatic triacylglycerol lipase (PNLIP) from Myocastor coypus (Coypu).